The following is an 89-amino-acid chain: Co-chaperonin GroES (89 aa).

Belongs to the GroES chaperonin family. In terms of assembly, heptamer of 7 subunits arranged in a ring. Interacts with the chaperonin GroEL.

The protein localises to the cytoplasm. In terms of biological role, together with the chaperonin GroEL, plays an essential role in assisting protein folding. The GroEL-GroES system forms a nano-cage that allows encapsulation of the non-native substrate proteins and provides a physical environment optimized to promote and accelerate protein folding. GroES binds to the apical surface of the GroEL ring, thereby capping the opening of the GroEL channel. This is Co-chaperonin GroES from Fervidobacterium nodosum (strain ATCC 35602 / DSM 5306 / Rt17-B1).